The sequence spans 93 residues: Putative septation protein SpoVG (93 aa).

It belongs to the SpoVG family.

Could be involved in septation. The chain is Putative septation protein SpoVG from Treponema denticola (strain ATCC 35405 / DSM 14222 / CIP 103919 / JCM 8153 / KCTC 15104).